The primary structure comprises 80 residues: MNKSINNLQDIFLNNARKERIPVTIFLVNGVQLKGIVKGFDSFTVVLDSDGKQQLVYKHAISTVSPAKPILFNSAQVFDN.

The Sm domain maps to 10–70 (DIFLNNARKE…ISTVSPAKPI (61 aa)).

This sequence belongs to the Hfq family. As to quaternary structure, homohexamer.

RNA chaperone that binds small regulatory RNA (sRNAs) and mRNAs to facilitate mRNA translational regulation in response to envelope stress, environmental stress and changes in metabolite concentrations. Also binds with high specificity to tRNAs. This Clostridium perfringens (strain SM101 / Type A) protein is RNA-binding protein Hfq.